Here is a 166-residue protein sequence, read N- to C-terminus: Interferon gamma (166 aa).

The signal sequence occupies residues 1–23 (MKYTSYILAFQLCIVLGSLGCYC). Gln24 carries the post-translational modification Pyrrolidone carboxylic acid. An N-linked (GlcNAc...) asparagine glycan is attached at Asn48. Asn120 is a glycosylation site (N-linked (GlcNAc...) asparagine; in dimeric form). A disordered region spans residues 147 to 166 (AKTGKRKRSQMLFRGRRASQ). Positions 149–166 (TGKRKRSQMLFRGRRASQ) are enriched in basic residues. Positions 162-166 (RRASQ) are excised as a propeptide.

Belongs to the type II (or gamma) interferon family. Homodimer. Interacts with IFNGR1 (via extracellular domain); this interaction promotes IFNGR1 dimerization. In terms of processing, proteolytic processing produces C-terminal heterogeneity, with proteins ending alternatively at Gly-150, Met-157 or Gly-161. Released primarily from activated T lymphocytes.

It localises to the secreted. In terms of biological role, type II interferon produced by immune cells such as T-cells and NK cells that plays crucial roles in antimicrobial, antiviral, and antitumor responses by activating effector immune cells and enhancing antigen presentation. Primarily signals through the JAK-STAT pathway after interaction with its receptor IFNGR1 to affect gene regulation. Upon IFNG binding, IFNGR1 intracellular domain opens out to allow association of downstream signaling components JAK2, JAK1 and STAT1, leading to STAT1 activation, nuclear translocation and transcription of IFNG-regulated genes. Many of the induced genes are transcription factors such as IRF1 that are able to further drive regulation of a next wave of transcription. Plays a role in class I antigen presentation pathway by inducing a replacement of catalytic proteasome subunits with immunoproteasome subunits. In turn, increases the quantity, quality, and repertoire of peptides for class I MHC loading. Increases the efficiency of peptide generation also by inducing the expression of activator PA28 that associates with the proteasome and alters its proteolytic cleavage preference. Up-regulates as well MHC II complexes on the cell surface by promoting expression of several key molecules such as cathepsins B/CTSB, H/CTSH, and L/CTSL. Participates in the regulation of hematopoietic stem cells during development and under homeostatic conditions by affecting their development, quiescence, and differentiation. This is Interferon gamma (IFNG) from Homo sapiens (Human).